A 292-amino-acid chain; its full sequence is MTQQPPDVEEDDCLSEYHHLFCPDLLQDKVAFITGGGSGIGFRIAEIFMRHGCHTVIVSRSLPRVSEAAKKLVAATGKRCLPLSMDVRVPPAVMAAVDQALKEFGKIDILINCAAGNFLCPASALSFNAFKTVVDIDTLGTFNVSRVLYEKFFRDHGGVIVNITATLSMRGQVLQLHAGAAKAAVDAMTRHLAVEWGPQNIRVNSLAPGAISGTEGLRRLGGPKASSKFKYLSSPIPRLGTKTEIAHSVLYLASPLASYVSGIVLVVDGGSWMTLPNDIGRLLEFESSSAKL.

NADP(+)-binding positions include 35-40 (GGGSGI), 60-64 (RSLPR), and D86. A substrate-binding site is contributed by R60. Substrate contacts are provided by residues R88, F118, and 126–128 (SFN). Residue K151 is modified to N6-acetyllysine. NADP(+)-binding positions include K182 and 208–214 (PGAISGT). Residue R219 coordinates substrate. Phosphoserine is present on S287. The short motif at 290–292 (AKL) is the Microbody targeting signal element. K291 carries the post-translational modification N6-acetyllysine.

It belongs to the short-chain dehydrogenases/reductases (SDR) family. 2,4-dienoyl-CoA reductase subfamily. In terms of assembly, monomer, dimer and oligomer.

The protein resides in the peroxisome. It carries out the reaction a (2E,4Z)-dienoyl-CoA + NADPH + H(+) = a 4,5-saturated-(3E)-enoyl-CoA + NADP(+). The enzyme catalyses a (2E,4E)-dienoyl-CoA + NADPH + H(+) = a 4,5-saturated-(3E)-enoyl-CoA + NADP(+). It catalyses the reaction (2E,4E)-hexadienoyl-CoA + NADPH + H(+) = (3E)-hexenoyl-CoA + NADP(+). The catalysed reaction is (2E,4E)-decadienoyl-CoA + NADPH + H(+) = (3E)-decenoyl-CoA + NADP(+). It carries out the reaction (2E,4Z,7Z,10Z,13Z,16Z,19Z)-docosaheptaenoyl-CoA + NADPH + H(+) = (3E,7Z,10Z,13Z,16Z,19Z)-docosahexaenoyl-CoA + NADP(+). Auxiliary enzyme of beta-oxidation. Participates in the degradation of unsaturated fatty enoyl-CoA esters having double bonds in both even- and odd-numbered positions in peroxisome. Catalyzes the NADP-dependent reduction of 2,4-dienoyl-CoA to yield trans-3-enoyl-CoA. Has activity towards short and medium chain 2,4-dienoyl-CoAs, but also towards 2,4,7,10,13,16,19-docosaheptaenoyl-CoA, suggesting that it does not constitute a rate limiting step in the peroxisomal degradation of docosahexaenoic acid. This chain is Peroxisomal 2,4-dienoyl-CoA reductase [(3E)-enoyl-CoA-producing] (Decr2), found in Rattus norvegicus (Rat).